Consider the following 422-residue polypeptide: MEAYIRQKRATPGMVQASDLQLVRPMSAVNRNGREVHAYDGPMQFMMSPSNPDQIISSGSPTTVTATGTTTGSVTTTPTSPYSDATLEKLTPSSQDSEDEESTPVDILPSSNSFDRHSDGHLTHSAPISPALNNNVSRDSQQDSGSSGNLKSMEHSSPQASGHNDAEGDVAGPIEQWVTQPAAQGVLYKCRITRDRKGMDRGLFPIYYLHLERDYGKRLFCLAGRKRKKSKTSNYIISCDPTDLSRQADGFVGKLRSNVFGTTFFVYDNGKKDDPVSPRLDLAVVIYDTNILGFKGPRNMTVLLPGMTEDDQRVKINSSDSHGQGLLDSWKSKHMDNVVELHNKTPIWNDETQSYVLNFHGRVTQASVKNFQLVHDSDPDYIVMQFGRTSDDIFTMDFRYPLCAFQAFAIALSSFDGKLACE.

A disordered region spans residues 49–169 (PSNPDQIISS…ASGHNDAEGD (121 aa)). Over residues 57 to 81 (SSGSPTTVTATGTTTGSVTTTPTSP) the composition is skewed to low complexity.

The protein belongs to the TUB family.

Its subcellular location is the cytoplasm. It is found in the nucleus. This is Protein king tubby 2 (king-tubby2) from Culex quinquefasciatus (Southern house mosquito).